The sequence spans 804 residues: Probable exo-1,4-beta-xylosidase xlnD (804 aa).

Positions 1–17 (MAVAALALLALLPQALG) are cleaved as a signal peptide. N-linked (GlcNAc...) asparagine glycosylation is found at N20, N115, N139, N234, and N243. D307 is a catalytic residue. 12 N-linked (GlcNAc...) asparagine glycosylation sites follow: N349, N382, N404, N433, N444, N485, N489, N621, N652, N666, N688, and N710.

Belongs to the glycosyl hydrolase 3 family.

It is found in the secreted. It carries out the reaction Hydrolysis of (1-&gt;4)-beta-D-xylans, to remove successive D-xylose residues from the non-reducing termini.. It participates in glycan degradation; xylan degradation. In terms of biological role, xylan 1,4-beta-xylosidase involved in the hydrolysis of xylan, a major structural heterogeneous polysaccharide found in plant biomass representing the second most abundant polysaccharide in the biosphere, after cellulose. This Aspergillus japonicus protein is Probable exo-1,4-beta-xylosidase xlnD (xlnD).